The chain runs to 210 residues: Large ribosomal subunit protein uL3 (210 aa).

Residues 119 to 151 are disordered; that stretch reads FQGAIKRHGQSRGPMSHGSRYHRRPGSMGPVAP.

Belongs to the universal ribosomal protein uL3 family. In terms of assembly, part of the 50S ribosomal subunit. Forms a cluster with proteins L14 and L19.

Its function is as follows. One of the primary rRNA binding proteins, it binds directly near the 3'-end of the 23S rRNA, where it nucleates assembly of the 50S subunit. The chain is Large ribosomal subunit protein uL3 from Bacillus cytotoxicus (strain DSM 22905 / CIP 110041 / 391-98 / NVH 391-98).